Consider the following 292-residue polypeptide: MPQTSDGNVHAPQYREAKPSQGDPSLSVSQLFRLDNRTIIITGATGFLGSTLAIAILESGADVVCLDLPPTPTAENWNDVKTTASRHEQQLSYYQLDVTDEDAVADTFAKFLPTLRYPVRGLVTCAGLSLNGPSSEFPASAFRKVLDINVTGTFLVAKATARAMISANTTGSMVFVASMSGYGANKGVDTAGYNSSKAAVHQLTRSLAAEWGSRVGLPLIRVNSLSPGYIRTAATAEALQKPGMEDQWTGDNMLYRLSRVDEFRAPVLFMLGDGSSFMTGADLRVDGGHCSW.

Positions 1–25 are disordered; the sequence is MPQTSDGNVHAPQYREAKPSQGDPS. NADP(+) contacts are provided by Leu-48, Asp-97, Lys-158, Tyr-193, Lys-197, Ile-230, and Thr-232. Tyr-193 acts as the Proton donor in catalysis. Lys-197 serves as the catalytic Lowers pKa of active site Tyr.

The protein belongs to the short-chain dehydrogenases/reductases (SDR) family.

Functionally, short chain dehydrogenases/reductase; part of the gene cluster that mediates the biosynthesis of notoamide, a fungal indole alkaloid that belongs to a family of natural products containing a characteristic bicyclo[2.2.2]diazaoctane core. The first step of notoamide biosynthesis involves coupling of L-proline and L-tryptophan by the bimodular NRPS notE', to produce cyclo-L-tryptophan-L-proline called brevianamide F. The reverse prenyltransferase notF' then acts as a deoxybrevianamide E synthase and converts brevianamide F to deoxybrevianamide E via reverse prenylation at C-2 of the indole ring leading to the bicyclo[2.2.2]diazaoctane core. Deoxybrevianamide E is further hydroxylated at C-6 of the indole ring, likely catalyzed by the cytochrome P450 monooxygenase notG', to yield 6-hydroxy-deoxybrevianamide E. 6-hydroxy-deoxybrevianamide E is a specific substrate of the prenyltransferase notC' for normal prenylation at C-7 to produce 6-hydroxy-7-prenyl-deoxybrevianamide, also called notoamide S. As the proposed pivotal branching point in notoamide biosynthesis, notoamide S can be diverted to notoamide E through an oxidative pyran ring closure putatively catalyzed by either notH' cytochrome P450 monooxygenase or the notD' FAD-linked oxidoreductase. This step would be followed by an indole 2,3-epoxidation-initiated pinacol-like rearrangement catalyzed by the notB' FAD-dependent monooxygenase leading to the formation of notoamide C and notoamide D. On the other hand notoamide S is converted to notoamide T by notH' (or notD'), a bifunctional oxidase that also functions as the intramolecular Diels-Alderase responsible for generation of (-)-notoamide T. To generate antipodal (+)-notoaminide T, notH (or notD) in Aspergillus strain MF297-2 is expected to catalyze a Diels-Alder reaction leading to the opposite stereochemistry. The remaining oxidoreductase notD' (or notH') likely catalyzes the oxidative pyran ring formation to yield (-)-stephacidin A. The FAD-dependent monooxygenase notI' is highly similar to notB' and is predicted to catalyze a similar conversion from (-)-stephacidin A to (+)-notoamide B via the 2,3-epoxidation of (-)-stephacidin A followed by a pinacol-type rearrangement. Finally, it remains unclear which enzyme could be responsible for the final hydroxylation steps leading to notoamide A and sclerotiamide. The function of notP' in the notoamide biosynthesis has not been determined yet. The chain is Short chain dehydrogenases/reductase notP' from Aspergillus versicolor.